A 65-amino-acid polypeptide reads, in one-letter code: Photosystem II reaction center protein Z (65 aa).

A run of 2 helical transmembrane segments spans residues 11 to 31 (LVLA…VIFA) and 44 to 64 (WLAC…DGIF).

The protein belongs to the PsbZ family. As to quaternary structure, PSII is composed of 1 copy each of membrane proteins PsbA, PsbB, PsbC, PsbD, PsbE, PsbF, PsbH, PsbI, PsbJ, PsbK, PsbL, PsbM, PsbT, PsbY, PsbZ, Psb30/Ycf12, at least 3 peripheral proteins of the oxygen-evolving complex and a large number of cofactors. It forms dimeric complexes.

It is found in the plastid. The protein localises to the chloroplast thylakoid membrane. May control the interaction of photosystem II (PSII) cores with the light-harvesting antenna, regulates electron flow through the 2 photosystem reaction centers. PSII is a light-driven water plastoquinone oxidoreductase, using light energy to abstract electrons from H(2)O, generating a proton gradient subsequently used for ATP formation. The sequence is that of Photosystem II reaction center protein Z from Euglena gracilis.